The chain runs to 226 residues: 2,3-bisphosphoglycerate-dependent phosphoglycerate mutase (226 aa).

Substrate contacts are provided by residues 8–15, 21–22, arginine 58, 109–112, lysine 120, 136–137, and 180–181; these read RHGQSVWN, TG, ERMY, RR, and GN. Histidine 9 acts as the Tele-phosphohistidine intermediate in catalysis. Glutamate 109 serves as the catalytic Proton donor/acceptor.

It belongs to the phosphoglycerate mutase family. BPG-dependent PGAM subfamily.

The catalysed reaction is (2R)-2-phosphoglycerate = (2R)-3-phosphoglycerate. Its pathway is carbohydrate degradation; glycolysis; pyruvate from D-glyceraldehyde 3-phosphate: step 3/5. In terms of biological role, catalyzes the interconversion of 2-phosphoglycerate and 3-phosphoglycerate. In Chlamydia muridarum (strain MoPn / Nigg), this protein is 2,3-bisphosphoglycerate-dependent phosphoglycerate mutase.